We begin with the raw amino-acid sequence, 276 residues long: MLVNFSKMHGLGNDFLVLDNVTQNVFLSPEQITKFANRNFGVGFDQLLVVEPPYDPDLDFHYRIYNADGSEVGQCGNGARCFAKFVRMKGLCNKHKIKVSTSTGKMNLHIERDGNISVTMPVPQFEPKKIPFTAQKTEGTYILRSESETVLCGAVSMGNPHCVVTVDSVAEADVESLGKELSVHERFPEDANVGFMEIVSPNYIKLRVYERGAAETLACGSGACAAVVIGYMQKKLAKQVTVELPGGKLRIFWQGPGHPVKMSGPATHVFDGQISI.

3 residues coordinate substrate: asparagine 13, glutamine 46, and asparagine 66. Cysteine 75 (proton donor) is an active-site residue. Substrate-binding positions include 76–77 (GN), asparagine 159, asparagine 192, and 210–211 (ER). Cysteine 219 acts as the Proton acceptor in catalysis. 220–221 (GS) serves as a coordination point for substrate.

The protein belongs to the diaminopimelate epimerase family. In terms of assembly, homodimer.

The protein localises to the cytoplasm. It carries out the reaction (2S,6S)-2,6-diaminopimelate = meso-2,6-diaminopimelate. Its pathway is amino-acid biosynthesis; L-lysine biosynthesis via DAP pathway; DL-2,6-diaminopimelate from LL-2,6-diaminopimelate: step 1/1. In terms of biological role, catalyzes the stereoinversion of LL-2,6-diaminopimelate (L,L-DAP) to meso-diaminopimelate (meso-DAP), a precursor of L-lysine and an essential component of the bacterial peptidoglycan. The chain is Diaminopimelate epimerase from Colwellia psychrerythraea (strain 34H / ATCC BAA-681) (Vibrio psychroerythus).